We begin with the raw amino-acid sequence, 479 residues long: Sucrose-6-phosphate hydrolase (479 aa).

The tract at residues 1 to 28 (MTAHDQELRRRAYEEVEKKEPIANSDPH) is disordered. Substrate-binding positions include 40 to 43 (LLND), Q59, 102 to 103 (YS), 161 to 162 (RD), and E220. D43 is a catalytic residue.

Belongs to the glycosyl hydrolase 32 family.

It catalyses the reaction Hydrolysis of terminal non-reducing beta-D-fructofuranoside residues in beta-D-fructofuranosides.. It participates in glycan biosynthesis; sucrose metabolism. The chain is Sucrose-6-phosphate hydrolase (sacA) from Bacillus subtilis (strain 168).